The sequence spans 316 residues: Probable cell division protein WhiA (316 aa).

A DNA-binding region (H-T-H motif) is located at residues 275-309; the sequence is TLKELGEMVSGGKISKSGINHRLRKIDEIAEKLRA.

It belongs to the WhiA family.

Its function is as follows. Involved in cell division and chromosome segregation. This chain is Probable cell division protein WhiA, found in Bacillus cytotoxicus (strain DSM 22905 / CIP 110041 / 391-98 / NVH 391-98).